Here is a 486-residue protein sequence, read N- to C-terminus: Ribulose bisphosphate carboxylase large chain 3 (486 aa).

Substrate-binding residues include Asn-125 and Thr-175. The active-site Proton acceptor is Lys-177. Lys-179 serves as a coordination point for substrate. Residues Lys-203, Asp-205, and Glu-206 each contribute to the Mg(2+) site. N6-carboxylysine is present on Lys-203. Residue His-295 is the Proton acceptor of the active site. Substrate is bound by residues Arg-296, His-328, and Ser-380.

This sequence belongs to the RuBisCO large chain family. Type I subfamily. Heterohexadecamer of 8 large chains and 8 small chains. It depends on Mg(2+) as a cofactor.

The catalysed reaction is 2 (2R)-3-phosphoglycerate + 2 H(+) = D-ribulose 1,5-bisphosphate + CO2 + H2O. The enzyme catalyses D-ribulose 1,5-bisphosphate + O2 = 2-phosphoglycolate + (2R)-3-phosphoglycerate + 2 H(+). Functionally, ruBisCO catalyzes two reactions: the carboxylation of D-ribulose 1,5-bisphosphate, the primary event in carbon dioxide fixation, as well as the oxidative fragmentation of the pentose substrate. Both reactions occur simultaneously and in competition at the same active site. The chain is Ribulose bisphosphate carboxylase large chain 3 from Bradyrhizobium sp. (strain BTAi1 / ATCC BAA-1182).